A 247-amino-acid chain; its full sequence is Cell division protein ZapD (247 aa).

This sequence belongs to the ZapD family. As to quaternary structure, interacts with FtsZ.

It is found in the cytoplasm. In terms of biological role, cell division factor that enhances FtsZ-ring assembly. Directly interacts with FtsZ and promotes bundling of FtsZ protofilaments, with a reduction in FtsZ GTPase activity. The sequence is that of Cell division protein ZapD from Salmonella agona (strain SL483).